The following is a 292-amino-acid chain: Undecaprenyl-diphosphatase (292 aa).

Transmembrane regions (helical) follow at residues 1–21 (MSLVSAALFGLLQALTEFLPV), 46–66 (FVTIIQAGTTLAVLVYFRADI), 90–110 (LGWYIVLGTVPAALAGKLLEH), 114–134 (ALGNWVIAGSLVALGLVLLAA), 192–212 (FLLSVPITLAAGAYKLWSTVP), 225–245 (VVGTVVSAVAGYLVIDWLLAW), and 253–273 (VFVVWRLAAGAAIAALILSGV).

Belongs to the UppP family.

The protein localises to the cell inner membrane. It catalyses the reaction di-trans,octa-cis-undecaprenyl diphosphate + H2O = di-trans,octa-cis-undecaprenyl phosphate + phosphate + H(+). In terms of biological role, catalyzes the dephosphorylation of undecaprenyl diphosphate (UPP). Confers resistance to bacitracin. The sequence is that of Undecaprenyl-diphosphatase from Anaeromyxobacter dehalogenans (strain 2CP-1 / ATCC BAA-258).